The chain runs to 408 residues: tRNA-specific 2-thiouridylase MnmA (408 aa).

ATP-binding positions include 20-27 and L46; that span reads AMSGGVDS. Catalysis depends on C114, which acts as the Nucleophile. Cysteines 114 and 210 form a disulfide. Residue G138 participates in ATP binding. The interaction with tRNA stretch occupies residues 160 to 162; that stretch reads RDQ. C210 (cysteine persulfide intermediate) is an active-site residue.

The protein belongs to the MnmA/TRMU family.

The protein localises to the cytoplasm. The catalysed reaction is S-sulfanyl-L-cysteinyl-[protein] + uridine(34) in tRNA + AH2 + ATP = 2-thiouridine(34) in tRNA + L-cysteinyl-[protein] + A + AMP + diphosphate + H(+). Its function is as follows. Catalyzes the 2-thiolation of uridine at the wobble position (U34) of tRNA, leading to the formation of s(2)U34. This Bartonella quintana (strain Toulouse) (Rochalimaea quintana) protein is tRNA-specific 2-thiouridylase MnmA.